The primary structure comprises 414 residues: Serine hydroxymethyltransferase (414 aa).

Residues L116 and 120 to 122 (GHL) contribute to the (6S)-5,6,7,8-tetrahydrofolate site. K224 is subject to N6-(pyridoxal phosphate)lysine. A (6S)-5,6,7,8-tetrahydrofolate-binding site is contributed by 348–350 (SPF).

Belongs to the SHMT family. As to quaternary structure, homodimer. The cofactor is pyridoxal 5'-phosphate.

The protein resides in the cytoplasm. The enzyme catalyses (6R)-5,10-methylene-5,6,7,8-tetrahydrofolate + glycine + H2O = (6S)-5,6,7,8-tetrahydrofolate + L-serine. Its pathway is one-carbon metabolism; tetrahydrofolate interconversion. It participates in amino-acid biosynthesis; glycine biosynthesis; glycine from L-serine: step 1/1. Its function is as follows. Catalyzes the reversible interconversion of serine and glycine with tetrahydrofolate (THF) serving as the one-carbon carrier. This reaction serves as the major source of one-carbon groups required for the biosynthesis of purines, thymidylate, methionine, and other important biomolecules. Also exhibits THF-independent aldolase activity toward beta-hydroxyamino acids, producing glycine and aldehydes, via a retro-aldol mechanism. The sequence is that of Serine hydroxymethyltransferase from Campylobacter jejuni subsp. doylei (strain ATCC BAA-1458 / RM4099 / 269.97).